We begin with the raw amino-acid sequence, 184 residues long: Putative serine carboxypeptidase-like 52 (184 aa).

An N-terminal signal peptide occupies residues 1-22 (MRTFSPKLLLLLLLVLRHHAES). A glycan (N-linked (GlcNAc...) asparagine) is linked at Asn93.

It belongs to the peptidase S10 family.

The protein localises to the secreted. This is Putative serine carboxypeptidase-like 52 (SCPL52) from Arabidopsis thaliana (Mouse-ear cress).